A 295-amino-acid polypeptide reads, in one-letter code: Shikimate dehydrogenase (NADP(+)) (295 aa).

Residues 18-20 and Thr-66 contribute to the shikimate site; that span reads SRS. Lys-70 functions as the Proton acceptor in the catalytic mechanism. Asn-91 and Asp-106 together coordinate shikimate. NADP(+)-binding positions include 130 to 134 and Met-235; that span reads GNGGA. Tyr-237 is a binding site for shikimate. Residue Gly-258 coordinates NADP(+).

It belongs to the shikimate dehydrogenase family. As to quaternary structure, homodimer.

The enzyme catalyses shikimate + NADP(+) = 3-dehydroshikimate + NADPH + H(+). It participates in metabolic intermediate biosynthesis; chorismate biosynthesis; chorismate from D-erythrose 4-phosphate and phosphoenolpyruvate: step 4/7. Involved in the biosynthesis of the chorismate, which leads to the biosynthesis of aromatic amino acids. Catalyzes the reversible NADPH linked reduction of 3-dehydroshikimate (DHSA) to yield shikimate (SA). The protein is Shikimate dehydrogenase (NADP(+)) of Chlorobium phaeobacteroides (strain DSM 266 / SMG 266 / 2430).